Here is a 79-residue protein sequence, read N- to C-terminus: Potassium channel toxin Hge-beta-KTx (79 aa).

The N-terminal stretch at 1-21 (MAKSFFAAFLIIMLISSLVDG) is a signal peptide. Positions 48 to 79 (EYMCPVVSSFCKQHCARLGKSGQCDLLECICS) constitute a BetaSPN-type CS-alpha/beta domain. Intrachain disulfides connect Cys51/Cys71, Cys58/Cys76, and Cys62/Cys78.

As to expression, expressed by the venom gland.

The protein localises to the secreted. The full peptide presents antibacterial and cytotoxic activities. The synthetic C-terminus (AA 33-76) inhibits voltage-gated potassium channels Kv1.1/KCNA1, Kv1.2/KCNA2, and Kv1.3/KCNA3. The chain is Potassium channel toxin Hge-beta-KTx from Hoffmannihadrurus gertschi (Scorpion).